A 140-amino-acid polypeptide reads, in one-letter code: Ribosomal RNA large subunit methyltransferase H (140 aa).

L55 and G87 together coordinate S-adenosyl-L-methionine.

It belongs to the RNA methyltransferase RlmH family. In terms of assembly, homodimer.

Its subcellular location is the cytoplasm. It catalyses the reaction pseudouridine(1915) in 23S rRNA + S-adenosyl-L-methionine = N(3)-methylpseudouridine(1915) in 23S rRNA + S-adenosyl-L-homocysteine + H(+). In terms of biological role, specifically methylates the pseudouridine at position 1915 (m3Psi1915) in 23S rRNA. This Rhizorhabdus wittichii (strain DSM 6014 / CCUG 31198 / JCM 15750 / NBRC 105917 / EY 4224 / RW1) (Sphingomonas wittichii) protein is Ribosomal RNA large subunit methyltransferase H.